Reading from the N-terminus, the 148-residue chain is Puroindoline-B (148 aa).

The N-terminal stretch at 1 to 19 is a signal peptide; that stretch reads MKTLFLLALLALVASTTFA. A propeptide spanning residues 20–29 is cleaved from the precursor; that stretch reads QYSEVGGWYN.

Post-translationally, five disulfide bonds are present. As to expression, endosperm and aleurone layer of developing kernels. In the aleurone layer, mainly localized to starch granules and the surface of the plasma membrane, forming a uniform layer, also abundant in the intercellular space. In the endosperm, mainly localized to starch granules and the plasma membrane, but less abundant in the intercellular space. Not found in roots or coleoptiles.

The protein resides in the membrane. It is found in the secreted. The protein localises to the extracellular space. In terms of biological role, acts as a membranotoxin, probably through its antibacterial and antifungal activities, contributing to the defense mechanism of the plant against predators. Forms monovalent cation-selective ion channels in membranes. Has antibacterial activity against the Gram-positive bacteria S.aureus and C.michiganensis, and the Gram-negative bacteria E.coli, P.syringae pv phaseoli, A.tumefaciens and E.carotovora subsp carotovora. Acts synergistically with PINA against bacteria. Contributes to grain texture and hardness. In Triticum aestivum (Wheat), this protein is Puroindoline-B (PINB).